Reading from the N-terminus, the 203-residue chain is Proteasome subunit beta 1 (203 aa).

Positions 1-7 (MTEKLKG) are cleaved as a propeptide — removed in mature form; by autocatalysis. Residue Thr-8 is the Nucleophile of the active site.

The protein belongs to the peptidase T1B family. In terms of assembly, the 20S proteasome core is composed of 14 alpha and 14 beta subunits that assemble into four stacked heptameric rings, resulting in a barrel-shaped structure. The two inner rings, each composed of seven catalytic beta subunits, are sandwiched by two outer rings, each composed of seven alpha subunits. The catalytic chamber with the active sites is on the inside of the barrel. Has a gated structure, the ends of the cylinder being occluded by the N-termini of the alpha-subunits. Is capped at one or both ends by the proteasome regulatory ATPase, PAN.

It is found in the cytoplasm. It catalyses the reaction Cleavage of peptide bonds with very broad specificity.. The formation of the proteasomal ATPase PAN-20S proteasome complex, via the docking of the C-termini of PAN into the intersubunit pockets in the alpha-rings, triggers opening of the gate for substrate entry. Interconversion between the open-gate and close-gate conformations leads to a dynamic regulation of the 20S proteasome proteolysis activity. Component of the proteasome core, a large protease complex with broad specificity involved in protein degradation. This is Proteasome subunit beta 1 from Thermococcus kodakarensis (strain ATCC BAA-918 / JCM 12380 / KOD1) (Pyrococcus kodakaraensis (strain KOD1)).